Here is a 275-residue protein sequence, read N- to C-terminus: Diaminopimelate epimerase (275 aa).

Substrate contacts are provided by Asn12, Gln45, and Asn65. Residue Cys74 is the Proton donor of the active site. Substrate-binding positions include Gly75–Asn76, Asn158, Asn191, and Glu209–Arg210. Cys218 acts as the Proton acceptor in catalysis. Gly219–Thr220 contributes to the substrate binding site.

It belongs to the diaminopimelate epimerase family. As to quaternary structure, homodimer.

Its subcellular location is the cytoplasm. The enzyme catalyses (2S,6S)-2,6-diaminopimelate = meso-2,6-diaminopimelate. The protein operates within amino-acid biosynthesis; L-lysine biosynthesis via DAP pathway; DL-2,6-diaminopimelate from LL-2,6-diaminopimelate: step 1/1. Functionally, catalyzes the stereoinversion of LL-2,6-diaminopimelate (L,L-DAP) to meso-diaminopimelate (meso-DAP), a precursor of L-lysine and an essential component of the bacterial peptidoglycan. In Shewanella putrefaciens (strain CN-32 / ATCC BAA-453), this protein is Diaminopimelate epimerase.